The primary structure comprises 344 residues: Probable electron transfer flavoprotein subunit alpha, mitochondrial (344 aa).

284–312 serves as a coordination point for FAD; sequence LYIAIGVSGAVQHLAGMKDSKVIVAINND.

This sequence belongs to the ETF alpha-subunit/FixB family. Heterodimer of an alpha and a beta subunit. FAD serves as cofactor.

It localises to the mitochondrion matrix. Functionally, the electron transfer flavoprotein serves as a specific electron acceptor for several dehydrogenases, including five acyl-CoA dehydrogenases, glutaryl-CoA and sarcosine dehydrogenase. It transfers the electrons to the main mitochondrial respiratory chain via ETF-ubiquinone oxidoreductase (ETF dehydrogenase). The protein is Probable electron transfer flavoprotein subunit alpha, mitochondrial (AIM45) of Saccharomyces cerevisiae (strain ATCC 204508 / S288c) (Baker's yeast).